A 184-amino-acid chain; its full sequence is dCTP deaminase (184 aa).

Position 107–112 (107–112 (KSTYAR)) interacts with dCTP. Glutamate 133 serves as the catalytic Proton donor/acceptor. DCTP contacts are provided by glutamine 152, tyrosine 166, and glutamine 176.

The protein belongs to the dCTP deaminase family. Homotrimer.

The enzyme catalyses dCTP + H2O + H(+) = dUTP + NH4(+). It functions in the pathway pyrimidine metabolism; dUMP biosynthesis; dUMP from dCTP (dUTP route): step 1/2. In terms of biological role, catalyzes the deamination of dCTP to dUTP. The sequence is that of dCTP deaminase from Herpetosiphon aurantiacus (strain ATCC 23779 / DSM 785 / 114-95).